The following is a 120-amino-acid chain: Large ribosomal subunit protein uL18 (120 aa).

This sequence belongs to the universal ribosomal protein uL18 family. As to quaternary structure, part of the 50S ribosomal subunit; part of the 5S rRNA/L5/L18/L25 subcomplex. Contacts the 5S and 23S rRNAs.

Its function is as follows. This is one of the proteins that bind and probably mediate the attachment of the 5S RNA into the large ribosomal subunit, where it forms part of the central protuberance. This Macrococcus caseolyticus (strain JCSC5402) (Macrococcoides caseolyticum) protein is Large ribosomal subunit protein uL18.